A 2261-amino-acid polypeptide reads, in one-letter code: MACWPQLRLLLWKNLTFRRRQTCQLLLEVAWPLFIFLILISVRLSYPPYEQHECHFPNKAMPSAGTLPWVQGIICNANNPCFRYPTPGEAPGVVGNFNKSIVSRLFSDAQRLLLYSQRDTSIKDMHKVLRMLRQIKHPNSNLKLQDFLVDNETFSGFLQHNLSLPRSTVDSLLQANVGLQKVFLQGYQLHLASLCNGSKLEEIIQLGDAEVSALCGLPRKKLDAAERVLRYNMDILKPVVTKLNSTSHLPTQHLAEATTVLLDSLGGLAQELFSTKSWSDMRQEVMFLTNVNSSSSSTQIYQAVSRIVCGHPEGGGLKIKSLNWYEDNNYKALFGGNNTEEDVDTFYDNSTTPYCNDLMKNLESSPLSRIIWKALKPLLVGKILYTPDTPATRQVMAEVNKTFQELAVFHDLEGMWEELSPQIWTFMENSQEMDLVRTLLDSRGNDQFWEQKLDGLDWTAQDIMAFLAKNPEDVQSPNGSVYTWREAFNETNQAIQTISRFMECVNLNKLEPIPTEVRLINKSMELLDERKFWAGIVFTGITPDSVELPHHVKYKIRMDIDNVERTNKIKDGYWDPGPRADPFEDMRYVWGGFAYLQDVVEQAIIRVLTGSEKKTGVYVQQMPYPCYVDDIFLRVMSRSMPLFMTLAWIYSVAVIIKSIVYEKEARLKETMRIMGLDNGILWFSWFVSSLIPLLVSAGLLVVILKLGNLLPYSDPSVVFVFLSVFAMVTILQCFLISTLFSRANLAAACGGIIYFTLYLPYVLCVAWQDYVGFSIKIFASLLSPVAFGFGCEYFALFEEQGIGVQWDNLFESPVEEDGFNLTTAVSMMLFDTFLYGVMTWYIEAVFPGQYGIPRPWYFPCTKSYWFGEEIDEKSHPGSSQKGVSEICMEEEPTHLRLGVSIQNLVKVYRDGMKVAVDGLALNFYEGQITSFLGHNGAGKTTTMSILTGLFPPTSGTAYILGKDIRSEMSSIRQNLGVCPQHNVLFDMLTVEEHIWFYARLKGLSEKHVKAEMEQMALDVGLPPSKLKSKTSQLSGGMQRKLSVALAFVGGSKVVILDEPTAGVDPYSRRGIWELLLKYRQGRTIILSTHHMDEADILGDRIAIISHGKLCCVGSSLFLKNQLGTGYYLTLVKKDVESSLSSCRNSSSTVSCLKKEDSVSQSSSDAGLGSDHESDTLTIDVSAISNLIRKHVSEARLVEDIGHELTYVLPYEAAKEGAFVELFHEIDDRLSDLGISSYGISETTLEEIFLKVAEESGVDAETSDGTLPARRNRRAFGDKQSCLHPFTEDDAVDPNDSDIDPESRETDLLSGMDGKGSYQLKGWKLTQQQFVALLWKRLLIARRSRKGFFAQIVLPAVFVCIALVFSLIVPPFGKYPSLELQPWMYNEQYTFVSNDAPEDMGTQELLNALTKDPGFGTRCMEGNPIPDTPCLAGEEDWTISPVPQSIVDLFQNGNWTMKNPSPACQCSSDKIKKMLPVCPPGAGGLPPPQRKQKTADILQNLTGRNISDYLVKTYVQIIAKSLKNKIWVNEFRYGGFSLGVSNSQALPPSHEVNDAIKQMKKLLKLTKDSSADRFLSSLGRFMAGLDTKNNVKVWFNNKGWHAISSFLNVINNAILRANLQKGENPSQYGITAFNHPLNLTKQQLSEVALMTTSVDVLVSICVIFAMSFVPASFVVFLIQERVSKAKHLQFISGVKPVIYWLSNFVWDMCNYVVPATLVIIIFICFQQKSYVSSTNLPVLALLLLLYGWSITPLMYPASFVFKIPSTAYVVLTSVNLFIGINGSVATFVLELFTNNKLNDINDILKSVFLIFPHFCLGRGLIDMVKNQAMADALERFGENRFVSPLSWDLVGRNLFAMAVEGVVFFLITVLIQYRFFIRPRPVKAKLPPLNDEDEDVRRERQRILDGGGQNDILEIKELTKIYRRKRKPAVDRICIGIPPGECFGLLGVNGAGKSTTFKMLTGDTPVTRGDAFLNKNSILSNIHEVHQNMGYCPQFDAITELLTGREHVEFFALLRGVPEKEVGKVGEWAIRKLGLVKYGEKYASNYSGGNKRKLSTAMALIGGPPVVFLDEPTTGMDPKARRFLWNCALSIVKEGRSVVLTSHSMEECEALCTRMAIMVNGRFRCLGSVQHLKNRFGDGYTIVVRIAGSNPDLKPVQEFFGLAFPGSVLKEKHRNMLQYQLPSSLSSLARIFSILSQSKKRLHIEDYSVSQTTLDQVFVNFAKDQSDDDHLKDLSLHKNQTVVDVAVLTSFLQDEKVKESYV.

The S-palmitoyl cysteine moiety is linked to residue Cys-3. N-linked (GlcNAc...) asparagine glycosylation is present at Asn-14. The chain crosses the membrane as a helical span at residues 22 to 42 (TCQLLLEVAWPLFIFLILISV). The S-palmitoyl cysteine moiety is linked to residue Cys-23. At 43-639 (RLSYPPYEQH…DIFLRVMSRS (597 aa)) the chain is on the extracellular side. An annulus domain 1 region spans residues 69–80 (WVQGIICNANNP). The cysteines at positions 75 and 309 are disulfide-linked. Asn-98, Asn-151, Asn-161, Asn-196, Asn-244, Asn-292, Asn-337, and Asn-349 each carry an N-linked (GlcNAc...) asparagine glycan. The segment at 368 to 379 (SRIIWKALKPLL) is annulus domain 2. Residues Asn-400, Asn-478, Asn-489, and Asn-521 are each glycosylated (N-linked (GlcNAc...) asparagine). Residues 564–594 (ERTNKIKDGYWDPGPRADPFEDMRYVWGGFA) are gateway domain. The next 5 helical transmembrane spans lie at 640-660 (MPLFMTLAWIYSVAVIIKSIV), 683-703 (FSWFVSSLIPLLVSAGLLVVI), 716-736 (SVVFVFLSVFAMVTILQCFLI), 745-765 (LAAACGGIIYFTLYLPYVLCV), and 777-797 (IFASLLSPVAFGFGCEYFALF). Residue Asn-820 is glycosylated (N-linked (GlcNAc...) asparagine). A helical membrane pass occupies residues 827-847 (MMLFDTFLYGVMTWYIEAVFP). The 233-residue stretch at 899–1131 (VSIQNLVKVY…LGTGYYLTLV (233 aa)) folds into the ABC transporter 1 domain. 933–940 (GHNGAGKT) is an ATP binding site. The chain crosses the membrane as a helical span at residues 941–961 (TTMSILTGLFPPTSGTAYILG). At Ser-1042 the chain carries Phosphoserine; by PKA. 2 S-palmitoyl cysteine lipidation sites follow: Cys-1110 and Cys-1111. Residues Asn-1144 and Asn-1294 are each glycosylated (N-linked (GlcNAc...) asparagine). The disordered stretch occupies residues 1285 to 1310 (FTEDDAVDPNDSDIDPESRETDLLSG). A compositionally biased stretch (acidic residues) spans 1287–1299 (EDDAVDPNDSDID). A Phosphoserine modification is found at Ser-1296. Residues 1351–1371 (IVLPAVFVCIALVFSLIVPPF) form a helical membrane-spanning segment. Residues 1372–1656 (GKYPSLELQP…ALMTTSVDVL (285 aa)) lie on the Extracellular side of the membrane. N-linked (GlcNAc...) asparagine glycosylation occurs at Asn-1453. Residues Cys-1463 and Cys-1477 are joined by a disulfide bond. 3 N-linked (GlcNAc...) asparagine glycosylation sites follow: Asn-1499, Asn-1504, and Asn-1637. The next 6 membrane-spanning stretches (helical) occupy residues 1657 to 1677 (VSICVIFAMSFVPASFVVFLI), 1703 to 1723 (FVWDMCNYVVPATLVIIIFIC), 1735 to 1755 (LPVLALLLLLYGWSITPLMYP), 1768 to 1788 (VVLTSVNLFIGINGSVATFVL), 1802 to 1822 (ILKSVFLIFPHFCLGRGLIDM), and 1852 to 1872 (NLFAMAVEGVVFFLITVLIQY). Residues 1912–2144 (LEIKELTKIY…FGDGYTIVVR (233 aa)) form the ABC transporter 2 domain. 1946-1953 (GVNGAGKS) provides a ligand contact to ATP. A glycan (N-linked (GlcNAc...) asparagine) is linked at Asn-2044. Ser-2054 is modified (phosphoserine; by PKA). Asn-2238 carries N-linked (GlcNAc...) asparagine glycosylation.

This sequence belongs to the ABC transporter superfamily. ABCA family. Interacts with MEGF10. May interact with APOE1; functionally associated with APOE1 in the biogenesis of HDLs. Interacts with ABCA8; this interaction potentiates cholesterol efflux. Interacts with ABCA12 and NR1H2; this interaction is required for ABCA1 localization to the cell surface and is necessary for its normal activity and stability. Phosphorylation on Ser-2054 regulates phospholipid efflux. In terms of processing, palmitoylated by ZDHHC8. Palmitoylation is essential for localization to the plasma membrane. As to expression, widely expressed in adult tissues. Highest levels are found in pregnant uterus and uterus.

It localises to the cell membrane. The protein localises to the endosome. It catalyses the reaction ATP + H2O + phospholipidSide 1 = ADP + phosphate + phospholipidSide 2.. The enzyme catalyses a 1,2-diacyl-sn-glycero-3-phosphocholine(out) + ATP + H2O = a 1,2-diacyl-sn-glycero-3-phosphocholine(in) + ADP + phosphate + H(+). It carries out the reaction a 1,2-diacyl-sn-glycero-3-phospho-L-serine(out) + ATP + H2O = a 1,2-diacyl-sn-glycero-3-phospho-L-serine(in) + ADP + phosphate + H(+). The catalysed reaction is a sphingomyelin(in) + ATP + H2O = a sphingomyelin(out) + ADP + phosphate + H(+). It catalyses the reaction cholesterol(in) + ATP + H2O = cholesterol(out) + ADP + phosphate + H(+). ATPase activity is decreased by cholesterol and ceramide. ATPase activity is stimulated by phosphatidylcholine and to a lesser degree by phosphatidylserine and sphingomyelin. Phospholipid translocase activity is highly reduced by berylium fluoride and aluminum flouride and reduced by N-ethylmaleimide. In terms of biological role, catalyzes the translocation of specific phospholipids from the cytoplasmic to the extracellular/lumenal leaflet of membrane coupled to the hydrolysis of ATP. Thereby, participates in phospholipid transfer to apolipoproteins to form nascent high density lipoproteins/HDLs. Transports preferentially phosphatidylcholine over phosphatidylserine. May play a similar role in the efflux of intracellular cholesterol to apolipoproteins and the formation of nascent high density lipoproteins/HDLs. Translocates phospholipids from the outer face of the plasma membrane and forces it through its gateway and annulus into an elongated hydrophobic tunnel in its extracellular domain. This chain is Phospholipid-transporting ATPase ABCA1, found in Mus musculus (Mouse).